The following is a 330-amino-acid chain: GMP reductase (330 aa).

Cys-180 (thioimidate intermediate) is an active-site residue. 209-232 (LIADGGIRHNGDIAKSVRFGASMV) contacts NADP(+).

It belongs to the IMPDH/GMPR family. GuaC type 2 subfamily.

It carries out the reaction IMP + NH4(+) + NADP(+) = GMP + NADPH + 2 H(+). Catalyzes the irreversible NADPH-dependent deamination of GMP to IMP. It functions in the conversion of nucleobase, nucleoside and nucleotide derivatives of G to A nucleotides, and in maintaining the intracellular balance of A and G nucleotides. The polypeptide is GMP reductase (Lactobacillus gasseri (strain ATCC 33323 / DSM 20243 / BCRC 14619 / CIP 102991 / JCM 1131 / KCTC 3163 / NCIMB 11718 / NCTC 13722 / AM63)).